The chain runs to 299 residues: Circadian clock oscillator protein KaiA (299 aa).

Residues 1-169 (MVSKLSLYLV…RLAEKLRERL (169 aa)) form the KaiA N-terminal domain. The interval 3-135 (SKLSLYLVTP…LHLAPSCALS (133 aa)) is psR domain, binds oxidized quinones. Residues 170 to 178 (GYLGVYYKR) form a flexible linker region. Residues 179–287 (NPKYFYRSLS…CEMYRRSIPR (109 aa)) enclose the KaiA C-terminal domain.

In terms of assembly, homodimer. The KaiABC complex composition changes during the circadian cycle to control KaiC phosphorylation. Complexes KaiC(6), KaiA(2-4):KaiC(6), KaiB(6):KaiC(6) and KaiC(6):KaiB(6):KaiA(12) are among the most important forms, many form cooperatively. KaiA and CikA bind to the same region of the KaiB(fs) form and therefore compete.

Its function is as follows. Key component of the KaiABC oscillator complex, which constitutes the main circadian regulator in cyanobacteria. Complex composition changes during the circadian cycle to control KaiC phosphorylation. KaiA stimulates KaiC autophosphorylation, while KaiB sequesters KaiA, leading to KaiC autodephosphorylation. KaiA binding to the KaiC CII domain during the subjective day yields KaiA(2-4):KaiC(6) complexes which stimulate KaiC autophosphorylation. Phospho-Ser-431 KaiC accumulation triggers binding of KaiB during the subjective night to form the KaiB(6):KaiC(6) complex, leading to changes in the output regulators CikA and SasA. KaiB(6):KaiC(6) formation exposes a site for KaiA binding on KaiB that sequesters KaiA from KaiC's CII domain, making the KaiC(6):KaiB(6):KaiA(12) complex resulting in KaiC autodephosphorylation. Complete dephosphorylation of KaiC leads to dissociation of KaiA(2):KaiB(1), completing 1 cycle of the Kai oscillator. Functionally, binds oxidized quinones via the N-terminal PsR domain, allowing it to sense redox changes and possibly mediate clock input. The sequence is that of Circadian clock oscillator protein KaiA from Picosynechococcus sp. (strain ATCC 27264 / PCC 7002 / PR-6) (Agmenellum quadruplicatum).